We begin with the raw amino-acid sequence, 319 residues long: CD2 antigen cytoplasmic tail-binding protein 2 homolog (319 aa).

Disordered stretches follow at residues 1–57 and 105–124; these read MASK…EDDV and NAFD…KNEP. Positions 12 to 24 are enriched in basic and acidic residues; it reads KVKEESFKKHTLD. Ser25 and Ser30 each carry phosphoserine. A compositionally biased stretch (acidic residues) spans 25–47; the sequence is SDEEDSDDYEREYLNDSDIEGGE. Position 37 is a phosphotyrosine (Tyr37). Phosphoserine is present on Ser41. The span at 109-124 shows a compositional bias: basic and acidic residues; sequence PAKDEENSSDEEKNEP. The region spanning 260–316 is the GYF domain; that stretch reads EVTWEFKWSQDETDIQGPFSTEKMLKWSQENYFKNGVYVRKCGENTNFYTSNRIDFD.

The protein localises to the nucleus. Its function is as follows. Required for embryonic epithelial tissue repair, but not for the assembly of the actomyosin cable at the wound edge. Probably acts downstream of rl in the regulation of Ddc and msn transcription to promote wound healing. This Drosophila melanogaster (Fruit fly) protein is CD2 antigen cytoplasmic tail-binding protein 2 homolog (holn1).